Here is a 470-residue protein sequence, read N- to C-terminus: Hydroxymethylglutaryl-CoA synthase (470 aa).

Glutamate 100 functions as the Proton donor/acceptor in the catalytic mechanism. Cysteine 134 serves as the catalytic Acyl-thioester intermediate. (3S)-3-hydroxy-3-methylglutaryl-CoA-binding residues include cysteine 134, threonine 176, serine 225, histidine 269, lysine 278, asparagine 348, and serine 382. Histidine 269 acts as the Proton donor/acceptor in catalysis.

The protein belongs to the thiolase-like superfamily. HMG-CoA synthase family.

It catalyses the reaction acetoacetyl-CoA + acetyl-CoA + H2O = (3S)-3-hydroxy-3-methylglutaryl-CoA + CoA + H(+). Its pathway is metabolic intermediate biosynthesis; (R)-mevalonate biosynthesis; (R)-mevalonate from acetyl-CoA: step 2/3. Functionally, hydroxymethylglutaryl-CoA synthase; part of the first module of ergosterol biosynthesis pathway that includes the early steps of the pathway, conserved across all eukaryotes, and which results in the formation of mevalonate from acetyl-coenzyme A (acetyl-CoA). This module also plays a key role in the biosynthesis of triterpenes such as ganoderic acids (GA), a group of highly oxygenated lanostane-type triterpenoids which are well recognized as a main group of unique bioactive compounds in the medicinal mushroom Ganoderma lucidum. In this module, the acetyl-CoA acetyltransferase catalyzes the formation of acetoacetyl-CoA. The hydroxymethylglutaryl-CoA synthase HMGS then condenses acetyl-CoA with acetoacetyl-CoA to form HMG-CoA. The rate-limiting step of the early module is the reduction to mevalonate by the 3-hydroxy-3-methylglutaryl-coenzyme A (HMG-CoA) reductase. The protein is Hydroxymethylglutaryl-CoA synthase of Ganoderma lucidum (Ling zhi medicinal fungus).